The following is a 342-amino-acid chain: Ankyrin repeat domain-containing protein 2A (342 aa).

The segment at 1 to 41 (MASNSEKNPLLSDEKPKSTEENKSSKPESASGSSTSSAMPG) is disordered. A compositionally biased stretch (basic and acidic residues) spans 12 to 26 (SDEKPKSTEENKSSK). Residues 27 to 37 (PESASGSSTSS) are compositionally biased toward low complexity. ANK repeat units follow at residues 217 to 246 (EEES…NKDE), 250 to 279 (EGRT…SVNA), 283 to 312 (NKNT…AVTL), and 316 to 342 (DEKT…DAFL). A 1,2-diacyl-3-O-(beta-D-galactosyl)-sn-glycerol is bound by residues H223 and E246. Y294 and R296 together coordinate a 1,2-diacyl-sn-glycero-3-phospho-(1'-sn-glycerol).

Interacts with TOM20-4, CYTB5-E, CBR1, APX3, APX5, TOC34 and GRF6. Binds to chloroplast outer envelope membrane (OEM) protein targeting signals, as well as to chloroplasts. Interacts with OEP7. Binds to HSP17.8 via its ankyrin repeats, this interaction enhances chaperone activity and chloroplast binding. Also interacts with HSP17.4A, HSP17.6A and HSP18.1. Binds specifically to two chloroplast glycolipids, monogalactosyldiacylglycerol (MGDG) and phosphatidylglycerol (PG). In terms of tissue distribution, ubiquitously expressed at basal level.

The protein localises to the cytoplasm. Its subcellular location is the nucleus. The protein resides in the plastid. It is found in the chloroplast outer membrane. In terms of biological role, exhibits chaperone activity toward chloroplast outer envelope membrane, mitochondrion outer membrane, endoplasmic reticulum membrane and peroxisomal proteins, by recruiting specific proteins containing a single transmembrane associated with an AKR2A-binding sequence (ABS) and subsequently binding glycolipids (e.g. monogalactosyldiacylglycerol (MGDG) and phosphatidylglycerol (PG)) present in the membrane of the target organelle. Seems to be involved in the regulation of hydrogen peroxide levels during biotic and abiotic stresses by optimizing the ascorbate peroxidase 3 (APX3) hydrogen peroxide-degrading activity. This regulation might be monitored by GRF6. Cytosolic targeting factor for chloroplast outer membrane (COM) proteins that mediates sorting and targeting of nascent chloroplast outer envelope membrane (OEM) proteins to the chloroplast. Facilitates the targeting of OEP7 to chloroplasts. Facilitates the targeting of APX3 to peroxisomes. Involved in cellular metabolism (e.g. peroxisome activity) and required for plant growth and development. In Arabidopsis thaliana (Mouse-ear cress), this protein is Ankyrin repeat domain-containing protein 2A.